The sequence spans 364 residues: MKFNEFLNHLSNYEPGKDIEVIAKEYGVKEVIKLASNENPFGTPPKAIECLRQNANKAHLYPDDSMIELKSTLAQKYKVQNENIIIGAGSDQVIEFAIHAKLNSKNAFLQAGVTFAMYEIYAKQCGAKCYKTQSITHDLNEFKKLYEAHKDEIKLIFLCLPNNPLGECLDASEVTKFIKGVDEDCLVVIDAAYNEFASFKDSKKHLEPCELIKEFDNVLYLGTFSKLYGLGGLRIGYGIANANIINAFYKLRAPFNVSNLALKAAVAAIDDDEFTKKTLENNFSQMQLYKEFAKKHNIKIIDSYTNFITYFFDEKNSTDLSEKLLKKGIIIRNLKSYGLNAIRITIGTSYENEKFFTEFDKILR.

An N6-(pyridoxal phosphate)lysine modification is found at Lys226.

The protein belongs to the class-II pyridoxal-phosphate-dependent aminotransferase family. Histidinol-phosphate aminotransferase subfamily. Homodimer. Pyridoxal 5'-phosphate is required as a cofactor.

The catalysed reaction is L-histidinol phosphate + 2-oxoglutarate = 3-(imidazol-4-yl)-2-oxopropyl phosphate + L-glutamate. The protein operates within amino-acid biosynthesis; L-histidine biosynthesis; L-histidine from 5-phospho-alpha-D-ribose 1-diphosphate: step 7/9. This chain is Histidinol-phosphate aminotransferase, found in Campylobacter jejuni subsp. jejuni serotype O:6 (strain 81116 / NCTC 11828).